A 280-amino-acid polypeptide reads, in one-letter code: Probable endonuclease 4 (280 aa).

Zn(2+) is bound by residues His77, His117, Glu148, Asp180, His183, His215, Asp228, His230, and Glu259.

The protein belongs to the AP endonuclease 2 family. Requires Zn(2+) as cofactor.

The enzyme catalyses Endonucleolytic cleavage to 5'-phosphooligonucleotide end-products.. In terms of biological role, endonuclease IV plays a role in DNA repair. It cleaves phosphodiester bonds at apurinic or apyrimidinic (AP) sites, generating a 3'-hydroxyl group and a 5'-terminal sugar phosphate. This Thermoplasma volcanium (strain ATCC 51530 / DSM 4299 / JCM 9571 / NBRC 15438 / GSS1) protein is Probable endonuclease 4.